The following is a 169-amino-acid chain: Transcription antitermination protein NusB (169 aa).

The segment at 147–169 (RGLIDQSFSRPQKPESEATEIEE) is disordered.

This sequence belongs to the NusB family.

Its function is as follows. Involved in transcription antitermination. Required for transcription of ribosomal RNA (rRNA) genes. Binds specifically to the boxA antiterminator sequence of the ribosomal RNA (rrn) operons. This is Transcription antitermination protein NusB from Chlorobium chlorochromatii (strain CaD3).